The chain runs to 454 residues: Arginine biosynthesis bifunctional protein ArgJ, mitochondrial (454 aa).

Positions 184, 213, 224, 311, 449, and 454 each coordinate substrate. The Nucleophile role is filled by T224.

The protein belongs to the ArgJ family. In terms of assembly, heterodimer of an alpha and a beta chain. Post-translationally, the alpha and beta chains are autoproteolytically processed from a single precursor protein within the mitochondrion.

The protein resides in the mitochondrion matrix. The catalysed reaction is N(2)-acetyl-L-ornithine + L-glutamate = N-acetyl-L-glutamate + L-ornithine. It catalyses the reaction L-glutamate + acetyl-CoA = N-acetyl-L-glutamate + CoA + H(+). The protein operates within amino-acid biosynthesis; L-arginine biosynthesis; L-ornithine and N-acetyl-L-glutamate from L-glutamate and N(2)-acetyl-L-ornithine (cyclic): step 1/1. It participates in amino-acid biosynthesis; L-arginine biosynthesis; N(2)-acetyl-L-ornithine from L-glutamate: step 1/4. Catalyzes two activities which are involved in the cyclic version of arginine biosynthesis: the synthesis of acetylglutamate from glutamate and acetyl-CoA, and of ornithine by transacetylation between acetylornithine and glutamate. This Aspergillus clavatus (strain ATCC 1007 / CBS 513.65 / DSM 816 / NCTC 3887 / NRRL 1 / QM 1276 / 107) protein is Arginine biosynthesis bifunctional protein ArgJ, mitochondrial.